The chain runs to 260 residues: NAD-capped RNA hydrolase NudC (260 aa).

Substrate-binding residues include Lys25 and Arg69. Cys98 and Cys101 together coordinate Zn(2+). A substrate-binding site is contributed by Glu111. Cys116 and Cys119 together coordinate Zn(2+). Tyr124 is a binding site for substrate. Residues 125–248 (PQIAPCVIVA…TVARRLIEDT (124 aa)) form the Nudix hydrolase domain. Residues Ala158, Glu174, and Glu178 each contribute to the a divalent metal cation site. The Nudix box signature appears at 159-180 (GFVEVGETLEQAVSREVLEESN). Position 192-199 (192-199 (QPWPFPHS)) interacts with substrate. Glu219 provides a ligand contact to a divalent metal cation. Ala241 is a substrate binding site.

This sequence belongs to the Nudix hydrolase family. NudC subfamily. Homodimer. Mg(2+) is required as a cofactor. Requires Mn(2+) as cofactor. The cofactor is Zn(2+).

The enzyme catalyses a 5'-end NAD(+)-phospho-ribonucleoside in mRNA + H2O = a 5'-end phospho-adenosine-phospho-ribonucleoside in mRNA + beta-nicotinamide D-ribonucleotide + 2 H(+). The catalysed reaction is NAD(+) + H2O = beta-nicotinamide D-ribonucleotide + AMP + 2 H(+). It carries out the reaction NADH + H2O = reduced beta-nicotinamide D-ribonucleotide + AMP + 2 H(+). MRNA decapping enzyme that specifically removes the nicotinamide adenine dinucleotide (NAD) cap from a subset of mRNAs by hydrolyzing the diphosphate linkage to produce nicotinamide mononucleotide (NMN) and 5' monophosphate mRNA. The NAD-cap is present at the 5'-end of some mRNAs and stabilizes RNA against 5'-processing. Has preference for mRNAs with a 5'-end purine. Catalyzes the hydrolysis of a broad range of dinucleotide pyrophosphates. In Yersinia pseudotuberculosis serotype O:1b (strain IP 31758), this protein is NAD-capped RNA hydrolase NudC.